A 95-amino-acid chain; its full sequence is Opiscorpine-2 (95 aa).

An N-terminal signal peptide occupies residues 1–19 (MNNKLTALIFHGLLAIASC). The BetaSPN-type CS-alpha/beta domain maps to 55–95 (EFMCMANMDPTGSCETHCQKASGEKGYCHGTKCKCGVPLSY). 3 cysteine pairs are disulfide-bonded: Cys-58-Cys-82, Cys-68-Cys-87, and Cys-72-Cys-89.

This sequence belongs to the long chain scorpion toxin family. Class 3 subfamily. As to expression, expressed by the venom gland.

It localises to the secreted. Its function is as follows. Has antimicrobial activity against yeasts and bacteria. The polypeptide is Opiscorpine-2 (Opistophthalmus carinatus (African yellow leg scorpion)).